The sequence spans 631 residues: Coiled-coil domain-containing protein 93 (631 aa).

2 disordered regions span residues 1-23 and 214-243; these read MGLP…DEEQ and QSKM…HEED. Residues 1–430 form a sufficient for interaction with CCDC22 region; the sequence is MGLPRGPEGQ…LKAERAPRGD (430 aa). The segment covering 215 to 225 has biased composition (basic and acidic residues); it reads SKMEKAEDKKT. Phosphoserine is present on residues Ser298, Ser301, and Ser305. Residues 309 to 631 adopt a coiled-coil conformation; the sequence is LGTSQLHRRK…LLSKVKAKAS (323 aa). Residues 421–433 show a composition bias toward basic and acidic residues; it reads LKAERAPRGDEKT. The disordered stretch occupies residues 421–447; sequence LKAERAPRGDEKTLSSGEPPGTLTSAM. The segment at 448-631 is sufficient for interaction with WASHC2C; that stretch reads THDEDLDRRY…LLSKVKAKAS (184 aa).

This sequence belongs to the CCDC93 family. In terms of assembly, component of the commander complex consisting of the CCC subcomplex and the retriever subcomplex. Component of the CCC (COMMD/CCDC22/CCDC93) subcomplex consisting of COMMD1, COMMD2, COMMD3, COMMD4, COMMD5, COMMD6, COMMD7, COMMD8, COMMD9, COMMD10, CCDC22 and CCDC93. Forms a coiled-coil heterodimer with CCDC22; this heterodimer interacts with the guanine nucleotide exchange factor DENND10; the interaction is direct. Interacts with WASHC1. Interacts directly with WASHC2C. Interacts with SNX17 and SNX31.

The protein resides in the early endosome. Its function is as follows. Component of the commander complex that is essential for endosomal recycling of transmembrane cargos; the commander complex is composed of composed of the CCC subcomplex and the retriever subcomplex. Component of the CCC complex, which is involved in the regulation of endosomal recycling of surface proteins, including integrins, signaling receptor and channels. The CCC complex associates with SNX17, retriever and WASH complexes to prevent lysosomal degradation and promote cell surface recycling of numerous cargos such as integrins ITGA5:ITGB1. Involved in copper-dependent ATP7A trafficking between the trans-Golgi network and vesicles in the cell periphery; the function is proposed to depend on its association within the CCC complex and cooperation with the WASH complex on early endosomes and is dependent on its interaction with WASHC2C. (Microbial infection) The CCC complex, in collaboration with the heterotrimeric retriever complex, mediates the exit of human papillomavirus to the cell surface. The protein is Coiled-coil domain-containing protein 93 (CCDC93) of Homo sapiens (Human).